Here is a 275-residue protein sequence, read N- to C-terminus: MTSTPIERAVYIVSDSTGITAETFSHSVLSQFDEVNFKPVRLPFIDTLDKAREVVARINRNALEAGVPPIVFSTLVNPEILALVRQSNGVFLDLFGTFVSHIEQALGLKSSHSIGRSHMAANSEKYRNRIDAINFSLAHDDGQFVNQLDQADVILLGVSRCGKTPTSLYLAMQYAVKAANFPLTPDDFERGALPKTIAPYRGKLFGLSIQPERLAEVRNERRPNSHYARLEQCRYEVAEAERMMRREGISWLSTTTKSIEEIATTVLQEVGLERV.

Residue 157–164 (GVSRCGKT) coordinates ADP.

It belongs to the pyruvate, phosphate/water dikinase regulatory protein family. PSRP subfamily.

It catalyses the reaction [pyruvate, water dikinase] + ADP = [pyruvate, water dikinase]-phosphate + AMP + H(+). The catalysed reaction is [pyruvate, water dikinase]-phosphate + phosphate + H(+) = [pyruvate, water dikinase] + diphosphate. Its function is as follows. Bifunctional serine/threonine kinase and phosphorylase involved in the regulation of the phosphoenolpyruvate synthase (PEPS) by catalyzing its phosphorylation/dephosphorylation. The sequence is that of Putative phosphoenolpyruvate synthase regulatory protein from Bordetella pertussis (strain Tohama I / ATCC BAA-589 / NCTC 13251).